Consider the following 248-residue polypeptide: Meiotically up-regulated gene 65 protein (248 aa).

Its function is as follows. Has a role in meiosis. The polypeptide is Meiotically up-regulated gene 65 protein (mug65) (Schizosaccharomyces pombe (strain 972 / ATCC 24843) (Fission yeast)).